Consider the following 211-residue polypeptide: Uridine kinase (211 aa).

ATP is bound at residue 13–20; it reads GASASGKS.

It belongs to the uridine kinase family.

The protein localises to the cytoplasm. The enzyme catalyses uridine + ATP = UMP + ADP + H(+). The catalysed reaction is cytidine + ATP = CMP + ADP + H(+). Its pathway is pyrimidine metabolism; CTP biosynthesis via salvage pathway; CTP from cytidine: step 1/3. The protein operates within pyrimidine metabolism; UMP biosynthesis via salvage pathway; UMP from uridine: step 1/1. This Shewanella pealeana (strain ATCC 700345 / ANG-SQ1) protein is Uridine kinase.